We begin with the raw amino-acid sequence, 109 residues long: MTETEFLALVDQVLDSIESQADDWAAGLDVDIEATRSGNVLTLVFEDGTQVVVNAQAAMQELWVAARSGGFHYRYDGQHWNDTRGGPRLPDALSQICSEAAGVPVSVRL.

It belongs to the frataxin family.

Its function is as follows. Involved in iron-sulfur (Fe-S) cluster assembly. May act as a regulator of Fe-S biogenesis. This is Iron-sulfur cluster assembly protein CyaY from Bordetella bronchiseptica (strain ATCC BAA-588 / NCTC 13252 / RB50) (Alcaligenes bronchisepticus).